A 156-amino-acid chain; its full sequence is Arginine repressor (156 aa).

This sequence belongs to the ArgR family.

It is found in the cytoplasm. It participates in amino-acid biosynthesis; L-arginine biosynthesis [regulation]. Regulates arginine biosynthesis genes. The chain is Arginine repressor from Shewanella oneidensis (strain ATCC 700550 / JCM 31522 / CIP 106686 / LMG 19005 / NCIMB 14063 / MR-1).